The chain runs to 178 residues: Relaxin-like protein SQ10 (178 aa).

The N-terminal stretch at 1–20 (MPALLFYLLGFCLLQGQVTG) is a signal peptide. 3 cysteine pairs are disulfide-bonded: cysteine 34–cysteine 165, cysteine 46–cysteine 178, and cysteine 164–cysteine 169. Residues 54-150 (ESPSPENPFL…SSASESNTFS (97 aa)) constitute a propeptide, connecting peptide.

Belongs to the insulin family. As to quaternary structure, heterodimer of a B chain and an A chain linked by two disulfide bonds.

The protein localises to the secreted. This chain is Relaxin-like protein SQ10, found in Oryctolagus cuniculus (Rabbit).